We begin with the raw amino-acid sequence, 117 residues long: Iron-sulfur cluster insertion protein ErpA (117 aa).

Iron-sulfur cluster contacts are provided by Cys45, Cys109, and Cys111.

Belongs to the HesB/IscA family. In terms of assembly, homodimer. Iron-sulfur cluster serves as cofactor.

Its function is as follows. Required for insertion of 4Fe-4S clusters for at least IspG. In Ruthia magnifica subsp. Calyptogena magnifica, this protein is Iron-sulfur cluster insertion protein ErpA.